The following is a 178-amino-acid chain: NADH-quinone oxidoreductase subunit I 2 (178 aa).

2 consecutive 4Fe-4S ferredoxin-type domains span residues 46 to 78 (IVLT…MQAA) and 88 to 117 (AWFR…LTPF). [4Fe-4S] cluster-binding residues include C58, C61, C64, C68, C97, C100, C103, and C107.

Belongs to the complex I 23 kDa subunit family. NDH-1 is composed of 14 different subunits. Subunits NuoA, H, J, K, L, M, N constitute the membrane sector of the complex. [4Fe-4S] cluster is required as a cofactor.

It is found in the cell inner membrane. It catalyses the reaction a quinone + NADH + 5 H(+)(in) = a quinol + NAD(+) + 4 H(+)(out). Its function is as follows. NDH-1 shuttles electrons from NADH, via FMN and iron-sulfur (Fe-S) centers, to quinones in the respiratory chain. The immediate electron acceptor for the enzyme in this species is believed to be ubiquinone. Couples the redox reaction to proton translocation (for every two electrons transferred, four hydrogen ions are translocated across the cytoplasmic membrane), and thus conserves the redox energy in a proton gradient. This Syntrophobacter fumaroxidans (strain DSM 10017 / MPOB) protein is NADH-quinone oxidoreductase subunit I 2.